We begin with the raw amino-acid sequence, 298 residues long: N-acetylmuramic acid 6-phosphate etherase (298 aa).

Positions 55-218 constitute an SIS domain; sequence IHAQVSGGGR…STGLMIKSGK (164 aa). The active-site Proton donor is the Glu-83. Glu-114 is an active-site residue.

This sequence belongs to the GCKR-like family. MurNAc-6-P etherase subfamily. As to quaternary structure, homodimer.

The catalysed reaction is N-acetyl-D-muramate 6-phosphate + H2O = N-acetyl-D-glucosamine 6-phosphate + (R)-lactate. Its pathway is amino-sugar metabolism; 1,6-anhydro-N-acetylmuramate degradation. It participates in amino-sugar metabolism; N-acetylmuramate degradation. It functions in the pathway cell wall biogenesis; peptidoglycan recycling. In terms of biological role, specifically catalyzes the cleavage of the D-lactyl ether substituent of MurNAc 6-phosphate, producing GlcNAc 6-phosphate and D-lactate. Together with AnmK, is also required for the utilization of anhydro-N-acetylmuramic acid (anhMurNAc) either imported from the medium or derived from its own cell wall murein, and thus plays a role in cell wall recycling. This Escherichia coli O17:K52:H18 (strain UMN026 / ExPEC) protein is N-acetylmuramic acid 6-phosphate etherase.